Reading from the N-terminus, the 470-residue chain is Uronate isomerase (470 aa).

It belongs to the metallo-dependent hydrolases superfamily. Uronate isomerase family.

It catalyses the reaction D-glucuronate = D-fructuronate. The catalysed reaction is aldehydo-D-galacturonate = keto-D-tagaturonate. The protein operates within carbohydrate metabolism; pentose and glucuronate interconversion. This Serratia proteamaculans (strain 568) protein is Uronate isomerase.